Consider the following 371-residue polypeptide: Peptide chain release factor 2 (371 aa).

Position 251 is an N5-methylglutamine (Q251).

The protein belongs to the prokaryotic/mitochondrial release factor family. Methylated by PrmC. Methylation increases the termination efficiency of RF2.

It is found in the cytoplasm. In terms of biological role, peptide chain release factor 2 directs the termination of translation in response to the peptide chain termination codons UGA and UAA. This is Peptide chain release factor 2 from Pseudarthrobacter chlorophenolicus (strain ATCC 700700 / DSM 12829 / CIP 107037 / JCM 12360 / KCTC 9906 / NCIMB 13794 / A6) (Arthrobacter chlorophenolicus).